Consider the following 1068-residue polypeptide: Carbamoyl phosphate synthase large chain (1068 aa).

Residues 1–401 (MPRNNDIKKV…ALMKAIRSLE (401 aa)) are carboxyphosphate synthetic domain. ATP is bound by residues arginine 129, arginine 169, glycine 175, glycine 176, arginine 208, isoleucine 210, glutamate 215, glycine 241, valine 242, histidine 243, glutamine 284, and glutamate 298. Residues 133 to 327 (KDTMEKIGEP…IAKVTAKIAL (195 aa)) form the ATP-grasp 1 domain. Residues glutamine 284, glutamate 298, and asparagine 300 each coordinate Mg(2+). Positions 284, 298, and 300 each coordinate Mn(2+). Residues 402 to 546 (QHVDSLMSYD…YSVFGSENEA (145 aa)) are oligomerization domain. The segment at 547–930 (AETNPQKKVL…ALYKAFEGAG (384 aa)) is carbamoyl phosphate synthetic domain. The ATP-grasp 2 domain occupies 672–862 (DEILQKTGIP…IVDLAARIIM (191 aa)). The ATP site is built by arginine 708, lysine 747, leucine 749, glutamate 753, glycine 778, valine 779, histidine 780, serine 781, glutamine 821, and glutamate 833. Residues glutamine 821, glutamate 833, and asparagine 835 each contribute to the Mg(2+) site. Mn(2+)-binding residues include glutamine 821, glutamate 833, and asparagine 835. Residues 931 to 1068 (VELPKYKQMI…PVDIATVKNL (138 aa)) form the MGS-like domain. Positions 931 to 1068 (VELPKYKQMI…PVDIATVKNL (138 aa)) are allosteric domain.

The protein belongs to the CarB family. In terms of assembly, composed of two chains; the small (or glutamine) chain promotes the hydrolysis of glutamine to ammonia, which is used by the large (or ammonia) chain to synthesize carbamoyl phosphate. Tetramer of heterodimers (alpha,beta)4. Mg(2+) is required as a cofactor. Mn(2+) serves as cofactor.

The enzyme catalyses hydrogencarbonate + L-glutamine + 2 ATP + H2O = carbamoyl phosphate + L-glutamate + 2 ADP + phosphate + 2 H(+). It catalyses the reaction hydrogencarbonate + NH4(+) + 2 ATP = carbamoyl phosphate + 2 ADP + phosphate + 2 H(+). It participates in amino-acid biosynthesis; L-arginine biosynthesis; carbamoyl phosphate from bicarbonate: step 1/1. Its pathway is pyrimidine metabolism; UMP biosynthesis via de novo pathway; (S)-dihydroorotate from bicarbonate: step 1/3. Its function is as follows. Large subunit of the glutamine-dependent carbamoyl phosphate synthetase (CPSase). CPSase catalyzes the formation of carbamoyl phosphate from the ammonia moiety of glutamine, carbonate, and phosphate donated by ATP, constituting the first step of 2 biosynthetic pathways, one leading to arginine and/or urea and the other to pyrimidine nucleotides. The large subunit (synthetase) binds the substrates ammonia (free or transferred from glutamine from the small subunit), hydrogencarbonate and ATP and carries out an ATP-coupled ligase reaction, activating hydrogencarbonate by forming carboxy phosphate which reacts with ammonia to form carbamoyl phosphate. The sequence is that of Carbamoyl phosphate synthase large chain from Agathobacter rectalis (strain ATCC 33656 / DSM 3377 / JCM 17463 / KCTC 5835 / VPI 0990) (Eubacterium rectale).